The following is a 109-amino-acid chain: Spermidine export protein MdtI (109 aa).

The next 4 membrane-spanning stretches (helical) occupy residues 6 to 26 (WVHA…NVFL), 36 to 56 (IFGL…SQAV), 64 to 84 (AYAL…WILF), and 88 to 108 (LNRK…MVKL).

It belongs to the drug/metabolite transporter (DMT) superfamily. Small multidrug resistance (SMR) (TC 2.A.7.1) family. MdtI subfamily. In terms of assembly, forms a complex with MdtJ.

It localises to the cell inner membrane. Functionally, catalyzes the excretion of spermidine. This is Spermidine export protein MdtI from Escherichia coli O139:H28 (strain E24377A / ETEC).